Consider the following 341-residue polypeptide: AB hydrolase superfamily protein C1039.03 (341 aa).

This sequence belongs to the AB hydrolase superfamily.

The protein localises to the cytoplasm. It localises to the nucleus. This is AB hydrolase superfamily protein C1039.03 from Schizosaccharomyces pombe (strain 972 / ATCC 24843) (Fission yeast).